The following is a 532-amino-acid chain: BTB/POZ domain-containing protein 3 (532 aa).

The interval 23-54 (KNRSKKSSKKTNTGGGGGGSSSSSSSSSNSKL) is disordered. A compositionally biased stretch (low complexity) spans 43–53 (SSSSSSSSNSK). Residues 130-200 (ADVHFVVGPP…IYCDEIDLAA (71 aa)) form the BTB domain. One can recognise a BACK domain in the interval 245–310 (FEEPDLTQRC…NWAEVECQRQ (66 aa)).

As to expression, expressed in visual cortex. Expressed in visual cortex layer IV neurons.

It localises to the cytoplasm. The protein localises to the cytosol. It is found in the nucleus. In terms of biological role, acts as a key regulator of dendritic field orientation during development of sensory cortex. Also directs dendrites toward active axon terminals when ectopically expressed. This Mustela putorius furo (European domestic ferret) protein is BTB/POZ domain-containing protein 3 (BTBD3).